The chain runs to 330 residues: Fructose-1,6-bisphosphatase class 1 (330 aa).

Mg(2+)-binding residues include glutamate 84, aspartate 103, leucine 105, and aspartate 106. Residues 106-109 (DGSS), asparagine 196, and lysine 262 each bind substrate. Residue glutamate 268 coordinates Mg(2+).

Belongs to the FBPase class 1 family. In terms of assembly, homotetramer. Requires Mg(2+) as cofactor.

The protein localises to the cytoplasm. The catalysed reaction is beta-D-fructose 1,6-bisphosphate + H2O = beta-D-fructose 6-phosphate + phosphate. It functions in the pathway carbohydrate biosynthesis; gluconeogenesis. This is Fructose-1,6-bisphosphatase class 1 from Shewanella sp. (strain W3-18-1).